Consider the following 450-residue polypeptide: Keratin, type I cytoskeletal 25 (450 aa).

The span at 1-11 (MSLRLSSASRR) shows a compositional bias: low complexity. Positions 1-20 (MSLRLSSASRRSCPRPTTGS) are disordered. The tract at residues 1–78 (MSLRLSSASR…VNERGLLSGN (78 aa)) is head. The segment at 79-114 (EKVTMQNLNDRLASYLDSVHALEEANADLEQKIKGW) is coil 1A. The 316-residue stretch at 79 to 394 (EKVTMQNLND…LLIGGDDGAC (316 aa)) folds into the IF rod domain. Residues 115–136 (YEKFGPGSCRGLDHDYSRYFPI) form a linker 1 region. The interval 137 to 228 (IDDLKNQIIA…KNHKEEMQVL (92 aa)) is coil 1B. A linker 12 region spans residues 229 to 251 (QCAAGGNVNVEMNAAPGVDLTVL). The segment at 252–390 (LNNMRAEYEA…ETYCLLIGGD (139 aa)) is coil 2. Residues 391–450 (DGACKSGGYKSKDYGSGNVGSQVKDPAKAIVVKKVLEEVDQRSKILTTRLHSLEEKSQSN) form a tail region. The residue at position 442 (Ser-442) is a Phosphoserine.

The protein belongs to the intermediate filament family. Heterodimer of a type I and a type II keratin. Heterodimer with type II keratin KRT5 leading to the formation of keratin intermediate filament (KIF) network. Interacts with KRT6A to form filaments. Strongly expressed in skin and scalp, and weak expression observed in thymus and tongue. In the hair follicle, expressed in Henle layer, Huxley layer and in the inner root sheath cuticle of the hair follicle. Expression extends from the bulb region up to the point of differentiation into the three layers. Also present in the medulla of beard hair (at protein level).

The protein localises to the cytoplasm. In terms of biological role, essential for the proper assembly of type I and type II keratin protein complexes and formation of keratin intermediate filaments in the inner root sheath (irs). Plays a role in the cytoskeleton organization. The polypeptide is Keratin, type I cytoskeletal 25 (Homo sapiens (Human)).